Reading from the N-terminus, the 115-residue chain is Large ribosomal subunit protein bL20c (115 aa).

Belongs to the bacterial ribosomal protein bL20 family.

It localises to the plastid. It is found in the chloroplast. Binds directly to 23S ribosomal RNA and is necessary for the in vitro assembly process of the 50S ribosomal subunit. It is not involved in the protein synthesizing functions of that subunit. The protein is Large ribosomal subunit protein bL20c (rpl20) of Chlorella vulgaris (Green alga).